We begin with the raw amino-acid sequence, 406 residues long: GTPase Obg (406 aa).

One can recognise an Obg domain in the interval 1-159 (MRFVDEAVIT…REIRLELKVL (159 aa)). Residues 120-143 (GGEGGLGNTHFKSSTNRAPRKCTT) are disordered. The region spanning 160 to 333 (ADVGLLGMPN…VVYYLMDQIE (174 aa)) is the OBG-type G domain. GTP is bound by residues 166 to 173 (GMPNAGKS), 191 to 195 (FTTMV), 213 to 216 (DIPG), 283 to 286 (NKLD), and 314 to 316 (SGL). Positions 173 and 193 each coordinate Mg(2+). The disordered stretch occupies residues 381–406 (ESMMDDDDDFDDDEDDGDVESIYVRD). Positions 383–399 (MMDDDDDFDDDEDDGDV) are enriched in acidic residues.

The protein belongs to the TRAFAC class OBG-HflX-like GTPase superfamily. OBG GTPase family. Monomer. Mg(2+) is required as a cofactor.

The protein localises to the cytoplasm. Functionally, an essential GTPase which binds GTP, GDP and possibly (p)ppGpp with moderate affinity, with high nucleotide exchange rates and a fairly low GTP hydrolysis rate. Plays a role in control of the cell cycle, stress response, ribosome biogenesis and in those bacteria that undergo differentiation, in morphogenesis control. This chain is GTPase Obg, found in Acinetobacter baumannii (strain SDF).